The primary structure comprises 462 residues: N-myc proto-oncogene protein (462 aa).

An interaction with AURKA region spans residues 19 to 47; it reads LEFDSLQPCFYPDEDDFYFGGPDSTPPGE. The interaction with AURKA and FBXW7 stretch occupies residues 61–90; sequence LSPSRAFPEHSPEPSNWATEMLLPEADLWG. The short motif at 76–85 is the 9aaTAD element; sequence NWATEMLLPE. 3 disordered regions span residues 134–177, 232–289, and 332–390; these read KLQH…ATLP, AAPA…SSNN, and APSP…LERQ. Low complexity-rich tracts occupy residues 143–176 and 232–244; these read GVSS…GATL and AAPA…PASS. Acidic residues predominate over residues 257–276; the sequence is TLSDSDDEDDEEEDEEEEID. Phosphoserine; by CK2 occurs at positions 259 and 261. Residues 379–431 enclose the bHLH domain; the sequence is ERRRNHNILERQRRNDLRSSFLTLRDHVPELVKNEKAAKVVILKKATEYVHAL. The tract at residues 431-452 is leucine-zipper; it reads LQANEHQLLLEKEKLQARQQQL.

As to quaternary structure, efficient DNA binding requires dimerization with another bHLH protein. Binds DNA as a heterodimer with MAX. Interacts with KDM5A, KDM5B and HUWE1. Interacts with MYCNOS. Interacts with AURKA; interaction is phospho-independent and triggers AURKA activation; AURKA competes with FBXW7 for binding to unphosphorylated MYCN but not for binding to unphosphorylated MYCN. Interacts with FBXW7; FBXW7 competes with AURKA for binding to unphosphorylated MYCN but not for binding to phosphorylated MYCN. Phosphorylated by GSK3-beta which may promote its degradation. Phosphorylated by AURKA.

The protein localises to the nucleus. Functionally, positively regulates the transcription of MYCNOS in neuroblastoma cells. In Mus musculus (Mouse), this protein is N-myc proto-oncogene protein (Mycn).